The following is a 234-amino-acid chain: Synaptogyrin-1 (234 aa).

N-acetylmethionine is present on Met1. The Cytoplasmic segment spans residues 1 to 23 (MEGGAYGAGKAGGAFDPYALVRQ). Positions 20-173 (LVRQPHTILR…QAVLAFQRYQ (154 aa)) constitute an MARVEL domain. A helical membrane pass occupies residues 24–44 (PHTILRVVSWLFSIVVFGSIV). Residues 45 to 71 (NEGYLNSASEGEEFCIYNRNPNACSYG) lie on the Lumenal side of the membrane. Residues 72–92 (VAVGVLAFLTCLLYLALDVYF) traverse the membrane as a helical segment. The Cytoplasmic segment spans residues 93–103 (PQISSVKDRKK). A helical transmembrane segment spans residues 104–124 (AVLSDIGVSAFWAFLWFVGFC). Residues 125 to 148 (YLANQWQVSKPKDNPLNEGTDAAR) are Lumenal-facing. Residues 149–169 (AAIAFSFFSIFTWAGQAVLAF) traverse the membrane as a helical segment. Topologically, residues 170–234 (QRYQIGADSA…EPQGYQSQGY (65 aa)) are cytoplasmic. Positions 192–234 (SSMPYAPYVEPSTGPDPAGMGGTYQQPANTFDTEPQGYQSQGY) are disordered. Over residues 214-234 (TYQQPANTFDTEPQGYQSQGY) the composition is skewed to polar residues.

This sequence belongs to the synaptogyrin family.

Its subcellular location is the cytoplasmic vesicle. The protein resides in the secretory vesicle. It localises to the synaptic vesicle membrane. The protein localises to the melanosome. Its function is as follows. May play a role in regulated exocytosis. Modulates the localization of synaptophysin/SYP into synaptic-like microvesicles and may therefore play a role in synaptic-like microvesicle formation and/or maturation. Involved in the regulation of short-term and long-term synaptic plasticity. The chain is Synaptogyrin-1 from Pongo abelii (Sumatran orangutan).